Reading from the N-terminus, the 165-residue chain is Type 3 secretion system regulator YopR (165 aa).

Residues 2–11 form a 5' secretion signal region; the sequence is TVTLNRGSIT. The interval 131–149 is 3' secretion signal; that stretch reads PYLSELINKELMILLPYNS.

The protein belongs to the YopR family.

It localises to the secreted. Its function is as follows. May be involved in the regulation of the assembly of the type III secretion system (T3SS), also called injectisome, which is used to inject bacterial effector proteins into eukaryotic host cells. May control the secretion and/or polymerization of YscF/SctF, the principal component of the needle filament, thereby impacting the assembly of the T3SS. Involved in pathogenesis. Essential for the establishment of Yersinia infections in a mouse model system. The sequence is that of Type 3 secretion system regulator YopR from Yersinia enterocolitica.